A 443-amino-acid chain; its full sequence is Chromosome partition protein MukF (443 aa).

The segment at 209-237 (LDETSGNLRELQDVLNASGDKLQSQLLRI) is leucine-zipper.

Belongs to the MukF family. Interacts, and probably forms a ternary complex, with MukE and MukB via its C-terminal region. The complex formation is stimulated by calcium or magnesium. It is required for an interaction between MukE and MukB.

The protein localises to the cytoplasm. It is found in the nucleoid. Involved in chromosome condensation, segregation and cell cycle progression. May participate in facilitating chromosome segregation by condensation DNA from both sides of a centrally located replisome during cell division. Not required for mini-F plasmid partitioning. Probably acts via its interaction with MukB and MukE. Overexpression results in anucleate cells. It has a calcium binding activity. In Glaesserella parasuis serovar 5 (strain SH0165) (Haemophilus parasuis), this protein is Chromosome partition protein MukF.